The chain runs to 591 residues: V-type ATP synthase alpha chain (591 aa).

Residue 233–240 (GPFGAGKT) participates in ATP binding.

Belongs to the ATPase alpha/beta chains family.

It catalyses the reaction ATP + H2O + 4 H(+)(in) = ADP + phosphate + 5 H(+)(out). Its function is as follows. Produces ATP from ADP in the presence of a proton gradient across the membrane. The V-type alpha chain is a catalytic subunit. The polypeptide is V-type ATP synthase alpha chain (Streptococcus pyogenes serotype M2 (strain MGAS10270)).